The chain runs to 195 residues: Molybdopterin synthase catalytic subunit (195 aa).

The tract at residues 1 to 37 is disordered; the sequence is MSARPEPQPGSERNATEPLPSHLDPTTYPRTLTTTHG. Over residues 25-37 the composition is skewed to low complexity; the sequence is PTTYPRTLTTTHG. Substrate-binding positions include 141-142, K157, and 164-166; these read HR and KRE.

The protein belongs to the MoaE family. MOCS2B subfamily. As to quaternary structure, heterotetramer; composed of 2 small (MOCS2A) and 2 large (MOCS2B) subunits.

Its subcellular location is the cytoplasm. It carries out the reaction 2 [molybdopterin-synthase sulfur-carrier protein]-C-terminal-Gly-aminoethanethioate + cyclic pyranopterin phosphate + H2O = molybdopterin + 2 [molybdopterin-synthase sulfur-carrier protein]-C-terminal Gly-Gly + 2 H(+). Its pathway is cofactor biosynthesis; molybdopterin biosynthesis. In terms of biological role, catalytic subunit of the molybdopterin synthase complex, a complex that catalyzes the conversion of precursor Z into molybdopterin. Acts by mediating the incorporation of 2 sulfur atoms from thiocarboxylated MOCS2A into precursor Z to generate a dithiolene group. The polypeptide is Molybdopterin synthase catalytic subunit (Emericella nidulans (strain FGSC A4 / ATCC 38163 / CBS 112.46 / NRRL 194 / M139) (Aspergillus nidulans)).